The chain runs to 1315 residues: Myopalladin (1315 aa).

4 disordered regions span residues 19 to 60, 81 to 145, 166 to 204, and 230 to 266; these read SYLA…DLPD, INHD…TQSK, HSSK…TERR, and EAKR…LGQP. Basic and acidic residues-rich tracts occupy residues 23-35 and 84-104; these read ETRH…RSRA and DPLE…DQTK. Phosphoserine is present on residues serine 99 and serine 129. Residues 166 to 180 show a composition bias toward basic residues; the sequence is HSSKRIRPRACKNHK. Residues 184–199 show a composition bias toward polar residues; the sequence is ESQNKVLQENSPTFSD. Residues 219 to 240 adopt a coiled-coil conformation; that stretch reads DNELNHAIEQREAKRREAELAA. Threonine 249 carries the phosphothreonine modification. Positions 267–357 constitute an Ig-like 1 domain; sequence PRFTQKLRSR…DSTSAEIYIE (91 aa). Cysteine 288 and cysteine 339 are joined by a disulfide. The segment at 359–392 is disordered; it reads VSSSDSEGDPNKEEMNRIQKPNEVSSPPTTSAAI. The Ig-like 2 domain occupies 432–528; it reads PVFTKMLQNL…GTVSSIAQLD (97 aa). Residues cysteine 453 and cysteine 512 are joined by a disulfide bond. Disordered stretches follow at residues 535–652, 674–704, and 725–747; these read ISDN…VLAK, LQNT…SSKQ, and SSTS…NTPQ. Polar residues predominate over residues 609–623; it reads SSGSGAANTSQTRPN. Position 641 is a phosphoserine (serine 641). A compositionally biased stretch (low complexity) spans 725–741; sequence SSTSTATVSPSSSPVFT. Phosphoserine is present on serine 754. Disordered regions lie at residues 762-814 and 840-865; these read HPST…TPVS and NAMG…KAPQ. The span at 779 to 790 shows a compositional bias: pro residues; it reads PAPPSPAEPAAP. A phosphoserine mark is found at serine 809 and serine 814. 2 positions are modified to phosphoserine: serine 903 and serine 924. Ig-like domains follow at residues 941 to 1025, 1068 to 1157, and 1167 to 1257; these read PIFD…GRIS, PHFL…LELT, and PVIL…ARLD. Cysteine 1089 and cysteine 1141 are joined by a disulfide.

The protein belongs to the myotilin/palladin family. As to quaternary structure, interacts with TTN/titin, NEB, NEBL, ACTN2 and CARP.

The protein resides in the cytoplasm. It localises to the nucleus. Its subcellular location is the myofibril. The protein localises to the sarcomere. It is found in the z line. In terms of biological role, component of the sarcomere that tethers together nebulin (skeletal muscle) and nebulette (cardiac muscle) to alpha-actinin, at the Z lines. The sequence is that of Myopalladin (Mypn) from Mus musculus (Mouse).